The primary structure comprises 315 residues: Glutaminase (315 aa).

Substrate is bound by residues Ser-70, Asn-120, Glu-166, Asn-173, Tyr-197, Tyr-249, and Val-267.

This sequence belongs to the glutaminase family. Homotetramer.

It catalyses the reaction L-glutamine + H2O = L-glutamate + NH4(+). This is Glutaminase from Rhizobium meliloti (strain 1021) (Ensifer meliloti).